The following is a 62-amino-acid chain: Photosystem II reaction center protein Z (62 aa).

2 helical membrane passes run 8–28 and 41–61; these read LVFI…VTFA and YTGA…NSFI.

The protein belongs to the PsbZ family. PSII is composed of 1 copy each of membrane proteins PsbA, PsbB, PsbC, PsbD, PsbE, PsbF, PsbH, PsbI, PsbJ, PsbK, PsbL, PsbM, PsbT, sbX, PsbY, PsbZ, Psb30/Ycf12, at least 3 peripheral proteins of the oxygen-evolving complex and a large number of cofactors. It forms dimeric complexes.

It is found in the plastid. The protein resides in the chloroplast thylakoid membrane. Its function is as follows. May control the interaction of photosystem II (PSII) cores with the light-harvesting antenna, regulates electron flow through the 2 photosystem reaction centers. PSII is a light-driven water plastoquinone oxidoreductase, using light energy to abstract electrons from H(2)O, generating a proton gradient subsequently used for ATP formation. The chain is Photosystem II reaction center protein Z from Gracilaria tenuistipitata var. liui (Red alga).